We begin with the raw amino-acid sequence, 198 residues long: tRNA (pseudouridine(54)-N(1))-methyltransferase (198 aa).

Residues Leu-130, Gly-153, 176–181 (LSPLEL), and Cys-186 each bind S-adenosyl-L-methionine.

Belongs to the methyltransferase superfamily. TrmY family. As to quaternary structure, homodimer.

It localises to the cytoplasm. It catalyses the reaction pseudouridine(54) in tRNA + S-adenosyl-L-methionine = N(1)-methylpseudouridine(54) in tRNA + S-adenosyl-L-homocysteine + H(+). In terms of biological role, specifically catalyzes the N1-methylation of pseudouridine at position 54 (Psi54) in tRNAs. This Methanococcus maripaludis (strain C6 / ATCC BAA-1332) protein is tRNA (pseudouridine(54)-N(1))-methyltransferase.